The sequence spans 401 residues: Exodeoxyribonuclease 7 large subunit (401 aa).

Belongs to the XseA family. Heterooligomer composed of large and small subunits.

Its subcellular location is the cytoplasm. It catalyses the reaction Exonucleolytic cleavage in either 5'- to 3'- or 3'- to 5'-direction to yield nucleoside 5'-phosphates.. Its function is as follows. Bidirectionally degrades single-stranded DNA into large acid-insoluble oligonucleotides, which are then degraded further into small acid-soluble oligonucleotides. The sequence is that of Exodeoxyribonuclease 7 large subunit from Clostridium botulinum (strain Hall / ATCC 3502 / NCTC 13319 / Type A).